The chain runs to 909 residues: Protein translocase subunit SecA (909 aa).

ATP is bound by residues Gln87, 105 to 109 (GEGKT), and Asp512. Residues 863–909 (LVGGGDEDDESIAAHTPMIRDGDKVGRNDPCPCGSGRKYKQCHGKLS) are disordered. Basic and acidic residues predominate over residues 880–889 (MIRDGDKVGR). Zn(2+) is bound by residues Cys893, Cys895, Cys904, and His905. Over residues 899–909 (RKYKQCHGKLS) the composition is skewed to basic residues.

The protein belongs to the SecA family. As to quaternary structure, monomer and homodimer. Part of the essential Sec protein translocation apparatus which comprises SecA, SecYEG and auxiliary proteins SecDF-YajC and YidC. Requires Zn(2+) as cofactor.

It is found in the cell inner membrane. The protein localises to the cytoplasm. The catalysed reaction is ATP + H2O + cellular proteinSide 1 = ADP + phosphate + cellular proteinSide 2.. Its function is as follows. Part of the Sec protein translocase complex. Interacts with the SecYEG preprotein conducting channel. Has a central role in coupling the hydrolysis of ATP to the transfer of proteins into and across the cell membrane, serving both as a receptor for the preprotein-SecB complex and as an ATP-driven molecular motor driving the stepwise translocation of polypeptide chains across the membrane. The chain is Protein translocase subunit SecA from Shewanella putrefaciens (strain CN-32 / ATCC BAA-453).